The following is a 210-amino-acid chain: Glutathione S-transferase P (210 aa).

Residues 2–81 (PPYTIVYFPV…HLGRSLGLYG (80 aa)) enclose the GST N-terminal domain. Tyr4 bears the Phosphotyrosine; by EGFR mark. Glutathione is bound by residues Tyr8, Arg14, Trp39, Lys45, 52–53 (QL), and 65–66 (QS). Positions 83-204 (DQKEAALVDM…SSPDHVNRPI (122 aa)) constitute a GST C-terminal domain. N6-succinyllysine is present on residues Lys103 and Lys116. Lys128 is modified (N6-acetyllysine).

The protein belongs to the GST superfamily. Pi family. Homodimer. Interacts with CDK5.

It is found in the cytoplasm. The protein localises to the mitochondrion. The protein resides in the nucleus. The enzyme catalyses RX + glutathione = an S-substituted glutathione + a halide anion + H(+). It carries out the reaction prostaglandin J2 + glutathione = prostaglandin J2-S-(R)-glutathione. It catalyses the reaction prostaglandin J2 + glutathione = prostaglandin J2-S-(S)-glutathione. The catalysed reaction is prostaglandin A2 + glutathione = prostaglandin A2-S-(S)-glutathione. The enzyme catalyses 11(S)-hydroxy-14(S),15(S)-epoxy-(5Z,8Z,12E)-eicosatrienoate + glutathione = (11S,15S)-dihydroxy-14(R)-S-glutathionyl-(5Z,8Z,12E)-eicosatrienoate. Conjugation of reduced glutathione to a wide number of exogenous and endogenous hydrophobic electrophiles. Involved in the formation of glutathione conjugates of both prostaglandin A2 (PGA2) and prostaglandin J2 (PGJ2). Participates in the formation of novel hepoxilin regioisomers. Negatively regulates CDK5 activity via p25/p35 translocation to prevent neurodegeneration. In Mesocricetus auratus (Golden hamster), this protein is Glutathione S-transferase P (GSTP1).